Consider the following 334-residue polypeptide: MSRVRRVLCRACLALAAVLAVLLLLPLPLPLPLPLPRAPAPDPGRVPTGSLTLEVSRLQPDDVFIAVKTTRKNHGPRLRLLLRTWISRAPRQTFIFTDGDDPELQLLAGSQMINTNCSAVRTRQALCCKMSVEYDKFIESGRKWFCHVDDDNYVNPKSLLHLLSTFSSNQDIYLGRPSLDHPIEATERVQGGGTSNTVKFWFATGGAGFCLSRGLALKMSPWASLGSFMSTAERVRLPDDCTVGYIVEGLLGARLLHSPLFHSHLENLQKLPSGAVLQQVTLSYGGPENPHNVVNVAGSFSIRQDPTRFQSVHCLLYPDTHWCPMKNRGKEAFQ.

At 1–6 (MSRVRR) the chain is on the cytoplasmic side. The helical; Signal-anchor for type II membrane protein transmembrane segment at 7 to 29 (VLCRACLALAAVLAVLLLLPLPL) threads the bilayer. At 30 to 334 (PLPLPLPRAP…MKNRGKEAFQ (305 aa)) the chain is on the lumenal side. A substrate-binding site is contributed by Arg-77. An N-linked (GlcNAc...) asparagine glycan is attached at Asn-116. 2 cysteine pairs are disulfide-bonded: Cys-117–Cys-128 and Cys-146–Cys-210. Asp-150 is a substrate binding site. Asp-151 is a binding site for Mn(2+). The active site involves Asp-240. A Mn(2+)-binding site is contributed by His-264. A disulfide bond links Cys-314 and Cys-323.

Belongs to the glycosyltransferase 31 family. Mn(2+) serves as cofactor. In terms of tissue distribution, most abundantly expressed in adult brain. Expressed in most neurons of the brain but not in glial cells. Also detected to a lower extent in adult lung and kidney.

The protein localises to the golgi apparatus membrane. The catalysed reaction is 3-O-(alpha-L-fucosyl)-L-threonyl-[EGF-like domain protein] + UDP-N-acetyl-alpha-D-glucosamine = 3-O-(N-acetyl-beta-D-glucosaminyl-(1-&gt;3)-alpha-L-fucosyl)-L-threonyl-[EGF-like domain protein] + UDP + H(+). It catalyses the reaction 3-O-(alpha-L-fucosyl)-L-seryl-[EGF-like domain protein] + UDP-N-acetyl-alpha-D-glucosamine = 3-O-(N-acetyl-beta-D-glucosaminyl-(1-&gt;3)-alpha-L-fucosyl)-L-seryl-[EGF-like domain protein] + UDP + H(+). Its function is as follows. Glycosyltransferase that initiates the elongation of O-linked fucose residues attached to EGF-like repeats in the extracellular domain of Notch molecules. Modulates NOTCH1 activity by modifying O-fucose residues at specific EGF-like domains resulting in enhancement of NOTCH1 activation by DLL1 and JAG1. Inhibits Notch signaling in postmitotic neurons of the brain. It may play a role in adult brain and in neurogenesis. It may play a role in limb development. The chain is Beta-1,3-N-acetylglucosaminyltransferase radical fringe from Rattus norvegicus (Rat).